The following is a 407-amino-acid chain: Transcriptional regulator alnR (407 aa).

The zn(2)-C6 fungal-type DNA-binding region spans 23-53 (SCDTCQEAKVKCSQHKPSCHRCLRHRQPCVY). The interval 53–85 (YSPQRRSGRPPKRPSPSSRLGPESNNSGDDIHN) is disordered. Residues 75-85 (ESNNSGDDIHN) show a composition bias toward polar residues.

The protein localises to the nucleus. Transcriptional regulator involved in the positive regulation of the expression of the gene cluster that mediates the biosynthesis of asperlin, a polyketide showing anti-inflammatory, antitumor and antibiotic activities. This Emericella nidulans (strain FGSC A4 / ATCC 38163 / CBS 112.46 / NRRL 194 / M139) (Aspergillus nidulans) protein is Transcriptional regulator alnR.